The chain runs to 219 residues: Charged multivesicular body protein 5 (219 aa).

Residues 1–10 (MNRFFGKAKP) are compositionally biased toward basic residues. A disordered region spans residues 1–21 (MNRFFGKAKPKAPPPSLTDCI). Residues 26–179 (SRAESIDKKI…LGDELLADED (154 aa)) adopt a coiled-coil conformation. Phosphoserine is present on Ser-86. The segment at 188 to 219 (SAPAIPEGVPTDTKNKDGVLVDEFGLPQIPAS) is disordered.

Belongs to the SNF7 family. In terms of assembly, probable peripherally associated component of the endosomal sorting required for transport complex III (ESCRT-III). ESCRT-III components are thought to multimerize to form a flat lattice on the perimeter membrane of the endosome. Several assembly forms of ESCRT-III may exist that interact and act sequentially. Interacts with VTA1. Interacts with CHMP2A. Interacts with VTA1; the interaction involves soluble CHMP5. Interacts with NOD2. Interacts with BROX. In terms of processing, ISGylated. Isgylation inhibits its interaction with VTA1.

Its subcellular location is the cytoplasm. The protein localises to the cytosol. It localises to the endosome membrane. It is found in the midbody. Its function is as follows. Probable peripherally associated component of the endosomal sorting required for transport complex III (ESCRT-III) which is involved in multivesicular bodies (MVBs) formation and sorting of endosomal cargo proteins into MVBs. MVBs contain intraluminal vesicles (ILVs) that are generated by invagination and scission from the limiting membrane of the endosome and mostly are delivered to lysosomes enabling degradation of membrane proteins, such as stimulated growth factor receptors, lysosomal enzymes and lipids. The MVB pathway appears to require the sequential function of ESCRT-O, -I,-II and -III complexes. ESCRT-III proteins mostly dissociate from the invaginating membrane before the ILV is released. The ESCRT machinery also functions in topologically equivalent membrane fission events, such as the terminal stages of cytokinesis. ESCRT-III proteins are believed to mediate the necessary vesicle extrusion and/or membrane fission activities, possibly in conjunction with the AAA ATPase VPS4. This chain is Charged multivesicular body protein 5 (Chmp5), found in Mus musculus (Mouse).